A 460-amino-acid chain; its full sequence is ATP synthase subunit beta (460 aa).

150-157 contributes to the ATP binding site; that stretch reads GGAGVGKT.

The protein belongs to the ATPase alpha/beta chains family. F-type ATPases have 2 components, CF(1) - the catalytic core - and CF(0) - the membrane proton channel. CF(1) has five subunits: alpha(3), beta(3), gamma(1), delta(1), epsilon(1). CF(0) has three main subunits: a(1), b(2) and c(9-12). The alpha and beta chains form an alternating ring which encloses part of the gamma chain. CF(1) is attached to CF(0) by a central stalk formed by the gamma and epsilon chains, while a peripheral stalk is formed by the delta and b chains.

Its subcellular location is the cell inner membrane. The catalysed reaction is ATP + H2O + 4 H(+)(in) = ADP + phosphate + 5 H(+)(out). Its function is as follows. Produces ATP from ADP in the presence of a proton gradient across the membrane. The catalytic sites are hosted primarily by the beta subunits. This chain is ATP synthase subunit beta, found in Serratia proteamaculans (strain 568).